We begin with the raw amino-acid sequence, 1008 residues long: ATP-dependent DNA/RNA helicase DHX36 (1008 aa).

A required for recruitment to cytoplasmic stress granules region spans residues 1 to 51; it reads MSYDYHQNWGRDGGPRSSGGGYGGGPAGGHGGNRGSGGGGGGGGGGRGGRG. Residues 1-58 form a disordered region; sequence MSYDYHQNWGRDGGPRSSGGGYGGGPAGGHGGNRGSGGGGGGGGGGRGGRGRHPGHLK. The segment at 1-104 is required for the pre-miR-134 transport; sequence MSYDYHQNWG…IVQLLNSVQA (104 aa). Residues 1-200 are necessary for nuclear and nucleolar caps localizations; it reads MSYDYHQNWG…KKNDLRYIEM (200 aa). The span at 16 to 48 shows a compositional bias: gly residues; sequence RSSGGGYGGGPAGGHGGNRGSGGGGGGGGGGRG. Positions 53–75 are DSM (DHX36-specific motif); it reads HPGHLKGREIGMWYAKKQGQKNK. Positions 53-105 are required for G4-DNA- and G4-RNA-binding; it reads HPGHLKGREIGMWYAKKQGQKNKEAERQERAVVHMDERREEQIVQLLNSVQAK. The stretch at 72–157 forms a coiled coil; that stretch reads QKNKEAERQE…INQEKKMFRI (86 aa). RecA-like domain regions lie at residues 106–386 and 387–628; these read NDKE…MIHI and PGFT…DYQL. S161 is modified (phosphoserine). A Helicase ATP-binding domain is found at 217 to 387; the sequence is VNLIDNHQVT…FGNCPMIHIP (171 aa). Residue 233–238 participates in ATP binding; it reads GCGKTT. The interval 265–317 is necessary for interaction with single-stranded DNA at the 3'-end of the G4-DNA structure; it reads RRISAISVAERVAAERAESCGSGNSTGYQIRLQSRLPRKQGSILYCTTGIILQ. The DEAH box motif lies at 334–337; the sequence is DEIH. E335 and H337 together coordinate Mg(2+). The region spanning 477-647 is the Helicase C-terminal domain; the sequence is ALIRYIVLEE…ELCLQIKILR (171 aa). Residues 498-557 are necessary for interaction with single-stranded DNA at the 3'-end of the G4-DNA structure; the sequence is WDNISTLHDLLMSQVMFKSDKFLIIPLHSLMPTVNQTQVFKRTPPGVRKIVIATNIAETS. A Nuclear localization signal motif is present at residues 517 to 528; that stretch reads DKFLIIPLHSLM. ATP-binding positions include S557 and 602–605; that span reads RAGR. The WH domain stretch occupies residues 629-698; it reads PEILRTPLEE…LGVHLARLPV (70 aa). Necessary for interaction with single-stranded DNA at the 3'-end of the G4-DNA structure regions lie at residues 638–697, 849–860, and 870–900; these read ELCL…ARLP, NLGKKRKMVKVY, and HPKS…IYLY. The OB-fold-like subdomains stretch occupies residues 841–905; that stretch reads PKVAKIRLNL…SIYLYDCTEV (65 aa). K947 carries the N6-acetyllysine modification. At S963 the chain carries Phosphoserine.

It belongs to the DEAD box helicase family. DEAH subfamily. As to quaternary structure, found in a multi-helicase-TICAM1 complex at least composed of DHX36, DDX1, DDX21 and TICAM1; this complex exists in resting cells with or without dsRNA poly(I:C) ligand stimulation. Interacts (via C-terminus) with TICAM1 (via TIR domain). Interacts (via C-terminus) with DDX21; this interaction serves as bridges to TICAM1. Interacts with TERT; this interaction is dependent on the ability of DHX36 to bind to the G-quadruplex RNA (G4-RNA) structure present in the telomerase RNA template component (TERC). Interacts with DKC1; this interaction is dependent on the ability of DHX36 to bind to the G4-RNA structure present in TERC. Interacts with PARN; this interaction stimulates PARN to enhance uPA mRNA decay. Interacts with EXOSC3; this interaction occurs in a RNase-insensitive manner. Interacts with EXOSC10; this interaction occurs in a RNase-insensitive manner. Interacts with ILF3; this interaction occurs in a RNA-dependent manner. Interacts with ELAVL1; this interaction occurs in an RNA-dependent manner. Interacts with DDX5; this interaction occurs in a RNA-dependent manner. Interacts with DDX17; this interaction occurs in a RNA-dependent manner. Interacts with HDAC1; this interaction occurs in a RNA-dependent manner. Interacts with HDAC3; this interaction occurs in a RNA-dependent manner. Interacts with HDAC4. Interacts with AGO1. Interacts with AGO2. Interacts with ERCC6. Mg(2+) is required as a cofactor. Highly expressed in testis.

It localises to the nucleus. The protein resides in the cytoplasm. It is found in the cytosol. Its subcellular location is the stress granule. The protein localises to the nucleus speckle. It localises to the chromosome. The protein resides in the telomere. It is found in the mitochondrion. Its subcellular location is the perikaryon. The protein localises to the cell projection. It localises to the dendrite. The protein resides in the axon. It carries out the reaction ATP + H2O = ADP + phosphate + H(+). With respect to regulation, ATPase activity is enhanced in the presence of homomeric poly(U) RNAs, but not by double-stranded DNA (dsDNA), double-stranded RNA (dsRNA) and tRNA. Functionally, multifunctional ATP-dependent helicase that unwinds G-quadruplex (G4) structures. Plays a role in many biological processes such as genomic integrity, gene expression regulations and as a sensor to initiate antiviral responses. G4 structures correspond to helical structures containing guanine tetrads. Binds with high affinity to and unwinds G4 structures that are formed in nucleic acids (G4-DNA and G4-RNA). Plays a role in genomic integrity. Converts the G4-RNA structure present in telomerase RNA template component (TREC) into a double-stranded RNA to promote P1 helix formation that acts as a template boundary ensuring accurate reverse transcription. Plays a role in transcriptional regulation. Resolves G4-DNA structures in promoters of genes, such as YY1, KIT/c-kit and ALPL and positively regulates their expression. Plays a role in post-transcriptional regulation. Unwinds a G4-RNA structure located in the 3'-UTR polyadenylation site of the pre-mRNA TP53 and stimulates TP53 pre-mRNA 3'-end processing in response to ultraviolet (UV)-induced DNA damage. Binds to the precursor-microRNA-134 (pre-miR-134) terminal loop and regulates its transport into the synapto-dendritic compartment. Involved in the pre-miR-134-dependent inhibition of target gene expression and the control of dendritic spine size. Plays a role in the regulation of cytoplasmic mRNA translation and mRNA stability. Binds to both G4-RNA structures and alternative non-quadruplex-forming sequence within the 3'-UTR of the PITX1 mRNA regulating negatively PITX1 protein expression. Binds to both G4-RNA structure in the 5'-UTR and AU-rich elements (AREs) localized in the 3'-UTR of NKX2-5 mRNA to either stimulate protein translation or induce mRNA decay in an ELAVL1-dependent manner, respectively. Also binds to ARE sequences present in several mRNAs mediating exosome-mediated 3'-5' mRNA degradation. Involved in cytoplasmic urokinase-type plasminogen activator (uPA) mRNA decay. Component of a multi-helicase-TICAM1 complex that acts as a cytoplasmic sensor of viral double-stranded RNA (dsRNA) and plays a role in the activation of a cascade of antiviral responses including the induction of pro-inflammatory cytokines via the adapter molecule TICAM1. Required for early embryonic development and hematopoiesis. Involved in the regulation of cardioblast differentiation and proliferation during heart development. Involved in spermatogonia differentiation. May play a role in ossification. This chain is ATP-dependent DNA/RNA helicase DHX36, found in Homo sapiens (Human).